We begin with the raw amino-acid sequence, 50 residues long: Large ribosomal subunit protein bL33B (50 aa).

Belongs to the bacterial ribosomal protein bL33 family.

In Metamycoplasma arthritidis (strain 158L3-1) (Mycoplasma arthritidis), this protein is Large ribosomal subunit protein bL33B.